Consider the following 34-residue polypeptide: uncharacterized protein (34 aa).

Residues 1–34 (MRLRRLFKQPSTRVLGVTNCPRQQGHQKRREQPD) are disordered. Residues 25–34 (GHQKRREQPD) are compositionally biased toward basic residues.

This is an uncharacterized protein from Schizosaccharomyces pombe (strain 972 / ATCC 24843) (Fission yeast).